Here is a 95-residue protein sequence, read N- to C-terminus: Co-chaperonin GroES (95 aa).

Belongs to the GroES chaperonin family. In terms of assembly, heptamer of 7 subunits arranged in a ring. Interacts with the chaperonin GroEL.

The protein localises to the cytoplasm. Functionally, together with the chaperonin GroEL, plays an essential role in assisting protein folding. The GroEL-GroES system forms a nano-cage that allows encapsulation of the non-native substrate proteins and provides a physical environment optimized to promote and accelerate protein folding. GroES binds to the apical surface of the GroEL ring, thereby capping the opening of the GroEL channel. The sequence is that of Co-chaperonin GroES from Stenotrophomonas maltophilia (strain K279a).